The following is a 215-amino-acid chain: Nascent polypeptide-associated complex subunit alpha (215 aa).

A disordered region spans residues 1-81 (MPGEATETVP…SEKKARKAMS (81 aa)). Residues 9–28 (VPATEQELPQPQAETGSGTE) show a composition bias toward polar residues. A compositionally biased stretch (acidic residues) spans 29–42 (SDSDESVPELEEQD). S43 carries the post-translational modification Phosphoserine; by ILK1. The segment covering 44 to 57 (TQATTQQAQLAAAA) has biased composition (low complexity). Residues 69–80 (QSRSEKKARKAM) form a required for DNA-binding region. The NAC-A/B domain maps to 70–135 (SRSEKKARKA…AKIEDLSQQA (66 aa)). The segment at 93–108 (RVTIRKSKNILFVITK) is RNA/DNA-binding. S132 bears the Phosphoserine mark. K142 carries the N6-acetyllysine; alternate modification. K142 participates in a covalent cross-link: Glycyl lysine isopeptide (Lys-Gly) (interchain with G-Cter in SUMO2); alternate. Position 159 is a phosphothreonine; by GSK3-beta (T159). A Phosphothreonine modification is found at T161. Residues S166, S186, S191, and S203 each carry the phosphoserine modification. Residues 176 to 213 (VEVKDIELVMSQANVSRAKAVRALKNNSNDIVNAIMEL) enclose the UBA domain.

Belongs to the NAC-alpha family. In terms of assembly, interacts with TBP and JUN. Part of the nascent polypeptide-associated complex (NAC), which is a heterodimer of NACA and BTF3 (via NAC-A/B domains). NAC associates with ribosomes through the BTF3/NACB subunit and contacts the ribosomal protein L23, which is positioned near the exiting site. Both subunits can contact nascent polypeptide chains. NACA may also form homodimers, and only this form binds DNA. In terms of processing, phosphorylation of Thr-159 by GSK3B may promote proteasome mediated degradation. Phosphorylation of Ser-43 by ILK during cell adhesion may promote nuclear localization. As to expression, ubiquitously expressed.

It localises to the cytoplasm. Its subcellular location is the nucleus. Functionally, prevents inappropriate targeting of non-secretory polypeptides to the endoplasmic reticulum (ER). Binds to nascent polypeptide chains as they emerge from the ribosome and blocks their interaction with the signal recognition particle (SRP), which normally targets nascent secretory peptides to the ER. Also reduces the inherent affinity of ribosomes for protein translocation sites in the ER membrane (M sites). May act as a specific coactivator for JUN, binding to DNA and stabilizing the interaction of JUN homodimers with target gene promoters. The polypeptide is Nascent polypeptide-associated complex subunit alpha (NACA) (Homo sapiens (Human)).